The sequence spans 154 residues: Myoglobin (154 aa).

A Globin domain is found at 2 to 148 (GLSDGEWQLV…FRNDMAAKYK (147 aa)). Ser4 carries the post-translational modification Phosphoserine. His65 provides a ligand contact to nitrite. His65 contributes to the O2 binding site. Position 68 is a phosphothreonine (Thr68). His94 is a heme b binding site.

It belongs to the globin family. Monomeric.

It is found in the cytoplasm. The protein resides in the sarcoplasm. It catalyses the reaction Fe(III)-heme b-[protein] + nitric oxide + H2O = Fe(II)-heme b-[protein] + nitrite + 2 H(+). The catalysed reaction is H2O2 + AH2 = A + 2 H2O. Functionally, monomeric heme protein which primary function is to store oxygen and facilitate its diffusion within muscle tissues. Reversibly binds oxygen through a pentacoordinated heme iron and enables its timely and efficient release as needed during periods of heightened demand. Depending on the oxidative conditions of tissues and cells, and in addition to its ability to bind oxygen, it also has a nitrite reductase activity whereby it regulates the production of bioactive nitric oxide. Under stress conditions, like hypoxia and anoxia, it also protects cells against reactive oxygen species thanks to its pseudoperoxidase activity. The polypeptide is Myoglobin (MB) (Sapajus apella (Brown-capped capuchin)).